The primary structure comprises 146 residues: Hemoglobin subunit beta (146 aa).

Position 1 is an N-acetylvaline (V1). The Globin domain occupies 2–146; the sequence is QLSGEEKAAV…VANALAHKYH (145 aa). Residue S44 is modified to Phosphoserine. The residue at position 59 (K59) is an N6-acetyllysine. H63 is a binding site for heme b. K82 bears the N6-acetyllysine mark. Residue H92 participates in heme b binding. The residue at position 93 (C93) is an S-nitrosocysteine. K144 carries the post-translational modification N6-acetyllysine.

The protein belongs to the globin family. In terms of assembly, heterotetramer of two alpha chains and two beta chains. Red blood cells.

Functionally, involved in oxygen transport from the lung to the various peripheral tissues. The protein is Hemoglobin subunit beta (HBB) of Equus hemionus kulan (Turkmenian kulan).